A 568-amino-acid polypeptide reads, in one-letter code: Small ribosomal subunit protein bS1 (568 aa).

S1 motif domains are found at residues 39–100 (KTVV…LSRE), 118–184 (GEFV…VSRR), 205–273 (GMVL…LGIK), 290–360 (GKQM…LSIK), 377–447 (GTII…LGIK), and 464–533 (GTIV…LSVK).

This sequence belongs to the bacterial ribosomal protein bS1 family.

In terms of biological role, binds mRNA; thus facilitating recognition of the initiation point. It is needed to translate mRNA with a short Shine-Dalgarno (SD) purine-rich sequence. This chain is Small ribosomal subunit protein bS1 (rpsA), found in Rickettsia conorii (strain ATCC VR-613 / Malish 7).